The following is a 292-amino-acid chain: Sulfhydrogenase 1 subunit gamma (292 aa).

The FAD-binding FR-type domain maps to 15-115 (YALHRVKVLK…RGPYGNGFPV (101 aa)). [2Fe-2S] cluster contacts are provided by C253, C258, C261, and C273.

As to quaternary structure, heterotetramer of alpha, beta, gamma and delta subunits. The nickel-containing alpha and delta subunits constitute the hydrogenase activity. The beta and gamma subunits (flavin-containing dimer) constitute the sulfur reductase activity. Requires FAD as cofactor. The cofactor is [2Fe-2S] cluster.

The protein localises to the cytoplasm. The enzyme catalyses n sulfur + H2 = (n-1) sulfur + hydrogen sulfide + H(+). With respect to regulation, stimulated by rubredoxin at pH 7.6 but not ferredoxin. Part of a bifunctional enzyme complex that functions as an NADPH-dependent hydrogen-evolving hydrogenase with sulfur reducing activity. May play a role in hydrogen cycling during fermentative growth. Activity not exhibited with NAD. The beta and gamma subunits form the sulfur reducing component that catalyzes the cytoplasmic production of hydrogen sulfide in the presence of elemental sulfur. Not active in the presence of sodium sulfate, sodium sulfite, sodium thiosulfate or cysteine. This chain is Sulfhydrogenase 1 subunit gamma, found in Pyrococcus furiosus (strain ATCC 43587 / DSM 3638 / JCM 8422 / Vc1).